The primary structure comprises 149 residues: MKSVDLKILDARMREYLPAYATPGSAGLDLRACTEASLVIEPGQTVLVPTGLAIHIGDPRYAAMILPRSGLGHKHGIVLGNLVGLIDSDYQGQLMVSTWNRGTQPFTLDPMERLAQLVIVPVQQVAFNVVEDFDASERGAGGFGSTGRG.

Substrate is bound by residues 68–70 (RSG), N81, 85–87 (LID), and M95.

The protein belongs to the dUTPase family. Requires Mg(2+) as cofactor.

The catalysed reaction is dUTP + H2O = dUMP + diphosphate + H(+). The protein operates within pyrimidine metabolism; dUMP biosynthesis; dUMP from dCTP (dUTP route): step 2/2. In terms of biological role, this enzyme is involved in nucleotide metabolism: it produces dUMP, the immediate precursor of thymidine nucleotides and it decreases the intracellular concentration of dUTP so that uracil cannot be incorporated into DNA. The chain is Deoxyuridine 5'-triphosphate nucleotidohydrolase from Bordetella pertussis (strain Tohama I / ATCC BAA-589 / NCTC 13251).